Here is a 281-residue protein sequence, read N- to C-terminus: Bifunctional protein FolD (281 aa).

NADP(+) is bound by residues 165–167, T192, and V233; that span reads GRG.

Belongs to the tetrahydrofolate dehydrogenase/cyclohydrolase family. As to quaternary structure, homodimer.

The enzyme catalyses (6R)-5,10-methylene-5,6,7,8-tetrahydrofolate + NADP(+) = (6R)-5,10-methenyltetrahydrofolate + NADPH. It carries out the reaction (6R)-5,10-methenyltetrahydrofolate + H2O = (6R)-10-formyltetrahydrofolate + H(+). It functions in the pathway one-carbon metabolism; tetrahydrofolate interconversion. Functionally, catalyzes the oxidation of 5,10-methylenetetrahydrofolate to 5,10-methenyltetrahydrofolate and then the hydrolysis of 5,10-methenyltetrahydrofolate to 10-formyltetrahydrofolate. The chain is Bifunctional protein FolD from Mycobacterium tuberculosis (strain ATCC 25177 / H37Ra).